Reading from the N-terminus, the 211-residue chain is Large ribosomal subunit protein eL13 (211 aa).

Residue K16 is modified to N6-acetyllysine. A phosphoserine mark is found at S52, S77, and S106. Residues K123 and K145 each participate in a glycyl lysine isopeptide (Lys-Gly) (interchain with G-Cter in SUMO2) cross-link. A Glycyl lysine isopeptide (Lys-Gly) (interchain with G-Cter in SUMO1); alternate cross-link involves residue K174. Glycyl lysine isopeptide (Lys-Gly) (interchain with G-Cter in SUMO2); alternate cross-links involve residues K174 and K177. Position 177 is an N6-acetyllysine; alternate (K177).

It belongs to the eukaryotic ribosomal protein eL13 family. In terms of assembly, component of the large ribosomal subunit.

It localises to the cytoplasm. In terms of biological role, component of the large ribosomal subunit. The ribosome is a large ribonucleoprotein complex responsible for the synthesis of proteins in the cell. The protein is Large ribosomal subunit protein eL13 (Rpl13) of Mus musculus (Mouse).